The chain runs to 340 residues: Protein B17 (340 aa).

Belongs to the orthopoxvirus B17 protein family.

This chain is Protein B17, found in Vaccinia virus (strain Western Reserve) (VACV).